Reading from the N-terminus, the 72-residue chain is MSDKPDSQVFCPNCNERLQKCLVQQNYAIIICPSLVCGYPFNQREVLENLTYVDDNDVLKVAKKRLSSRSKP.

It localises to the cytoplasm. Its subcellular location is the nucleus. This is an uncharacterized protein from Saccharomyces cerevisiae (strain ATCC 204508 / S288c) (Baker's yeast).